We begin with the raw amino-acid sequence, 349 residues long: S-adenosylmethionine:tRNA ribosyltransferase-isomerase (349 aa).

It belongs to the QueA family. Monomer.

It localises to the cytoplasm. The enzyme catalyses 7-aminomethyl-7-carbaguanosine(34) in tRNA + S-adenosyl-L-methionine = epoxyqueuosine(34) in tRNA + adenine + L-methionine + 2 H(+). The protein operates within tRNA modification; tRNA-queuosine biosynthesis. Its function is as follows. Transfers and isomerizes the ribose moiety from AdoMet to the 7-aminomethyl group of 7-deazaguanine (preQ1-tRNA) to give epoxyqueuosine (oQ-tRNA). This Azotobacter vinelandii (strain DJ / ATCC BAA-1303) protein is S-adenosylmethionine:tRNA ribosyltransferase-isomerase.